The sequence spans 261 residues: Early E1A protein (261 aa).

The tract at residues 43 to 51 (PTLHDLYDL) is interaction with RB1 in competition with E2F1. An interaction with UBE2I region spans residues 78 to 149 (EGLDINPPPE…VNEGVKAASD (72 aa)). The short motif at 106 to 110 (PDLGA) is the PXLXP motif, interaction with host ZMYND11 element. Residues 115–119 (LRCYE) carry the LXCXE motif, interaction with host RB1 and TMEM173/STING motif. Residues 163–183 (CKSCEFHRNNTGMKELLCSLC) fold into a zinc finger. Residues 197–261 (SDDESPSPDS…DLSTRKLPRQ (65 aa)) form a disordered region. The segment covering 203-212 (SPDSTTSPPE) has biased composition (low complexity). The PXDLS motif, CTBP-binding motif lies at 250–254 (PLDLS). The Nuclear localization signal motif lies at 256–261 (RKLPRQ).

It belongs to the adenoviridae E1A protein family. As to quaternary structure, interacts with host UBE2I; this interaction interferes with polySUMOylation. Interacts with host RB1; this interaction induces the aberrant dissociation of RB1-E2F1 complex thereby disrupting the activity of RB1 and activating E2F1-regulated genes. Interacts with host ATF7; the interaction enhances ATF7-mediated viral transactivation activity which requires the zinc binding domains of both proteins. Isoform early E1A 32 kDa protein and isoform early E1A 26 kDa protein interact (via N-terminus) with CUL1 and E3 ubiquitin ligase RBX1; these interactions inhibit RBX1-CUL1-dependent elongation reaction of ubiquitin chains and attenuate ubiquitination of SCF(FBXW7) target proteins. Interacts (via PXLXP motif) with host ZMYND11/BS69 (via MYND-type zinc finger); this interaction inhibits E1A mediated transactivation. Interacts with host EP300; this interaction stimulates the acetylation of RB1 by recruiting EP300 and RB1 into a multimeric-protein complex. Interacts with host CTBP1 and CTBP2; this interaction seems to potentiate viral replication. Interacts with host DCAF7. Interacts with host DYRK1A. Interacts with host KPNA4; this interaction allows E1A import into the host nucleus. Interacts with host EP400; this interaction stabilizes MYC. Interacts with host TBP protein; this interaction probably disrupts the TBP-TATA complex. Interacts (via LXCXE motif) with host TMEM173/STING; this interaction impairs the ability of TMEM173/STING to sense cytosolic DNA and promote the production of type I interferon (IFN-alpha and IFN-beta). Interacts (via C-terminus) with host ZBED1/hDREF (via C-terminus); the interaction is direct.

The protein resides in the host nucleus. In terms of biological role, plays a role in viral genome replication by driving entry of quiescent cells into the cell cycle. Stimulation of progression from G1 to S phase allows the virus to efficiently use the cellular DNA replicating machinery to achieve viral genome replication. E1A protein has both transforming and trans-activating activities. Induces the disassembly of the E2F1 transcription factor from RB1 by direct competition for the same binding site on RB1, with subsequent transcriptional activation of E2F1-regulated S-phase genes and of the E2 region of the adenoviral genome. Release of E2F1 leads to the ARF-mediated inhibition of MDM2 and causes TP53/p53 to accumulate because it is not targeted for degradation by MDM2-mediated ubiquitination anymore. This increase in TP53, in turn, would arrest the cell proliferation and direct its death but this effect is counteracted by the viral protein E1B-55K. Inactivation of the ability of RB1 to arrest the cell cycle is critical for cellular transformation, uncontrolled cellular growth and proliferation induced by viral infection. Interaction with RBX1 and CUL1 inhibits ubiquitination of the proteins targeted by SCF(FBXW7) ubiquitin ligase complex, and may be linked to unregulated host cell proliferation. The tumorigenesis-restraining activity of E1A may be related to the disruption of the host CtBP-CtIP complex through the CtBP binding motif. Interaction with host TMEM173/STING impairs the ability of TMEM173/STING to sense cytosolic DNA and promote the production of type I interferon (IFN-alpha and IFN-beta). Promotes the sumoylation of host ZBED1/hDREF with SUMO1. The polypeptide is Early E1A protein (Human adenovirus B serotype 7 (HAdV-7)).